A 292-amino-acid polypeptide reads, in one-letter code: 4-hydroxy-tetrahydrodipicolinate synthase (292 aa).

Thr45 contacts pyruvate. Tyr133 acts as the Proton donor/acceptor in catalysis. Lys161 acts as the Schiff-base intermediate with substrate in catalysis. Residue Ile203 participates in pyruvate binding.

The protein belongs to the DapA family. As to quaternary structure, homodimer.

It localises to the cytoplasm. The catalysed reaction is L-aspartate 4-semialdehyde + pyruvate = (2S,4S)-4-hydroxy-2,3,4,5-tetrahydrodipicolinate + H2O + H(+). It participates in amino-acid biosynthesis; L-lysine biosynthesis via DAP pathway; (S)-tetrahydrodipicolinate from L-aspartate: step 3/4. Functionally, catalyzes the condensation of (S)-aspartate-beta-semialdehyde [(S)-ASA] and pyruvate to 4-hydroxy-tetrahydrodipicolinate (HTPA). This Stutzerimonas stutzeri (strain A1501) (Pseudomonas stutzeri) protein is 4-hydroxy-tetrahydrodipicolinate synthase.